Consider the following 376-residue polypeptide: UPF0754 membrane protein SSP0953 (376 aa).

2 helical membrane-spanning segments follow: residues 4 to 24 (FLVIIFMMVIGALIGGVTNVI) and 356 to 376 (FLGFLLGGIIGLFQGVIAIFV).

Belongs to the UPF0754 family.

The protein localises to the cell membrane. In Staphylococcus saprophyticus subsp. saprophyticus (strain ATCC 15305 / DSM 20229 / NCIMB 8711 / NCTC 7292 / S-41), this protein is UPF0754 membrane protein SSP0953.